Here is a 291-residue protein sequence, read N- to C-terminus: Stomatin-like protein 3 (291 aa).

Phosphoserine is present on S7. The helical; Signal-anchor for type III membrane protein transmembrane segment at 29-49 (WILFSLSFLLVIITFPISIWM) threads the bilayer. Residues 50 to 291 (CLKIIKEYER…DNHKKLPNKA (242 aa)) lie on the Cytoplasmic side of the membrane. At S241 the chain carries Phosphoserine.

This sequence belongs to the band 7/mec-2 family. In terms of assembly, homodimer. Interacts with PIEZO1 and PIEZO2.

The protein resides in the cell membrane. Its function is as follows. Required for the function of many mechanoreceptors. Modulate mechanotransduction channels and acid-sensing ion channels (ASIC) proteins. Potentiates PIEZO1 and PIEZO2 function by increasing their sensitivity to mechanical stimulations. The chain is Stomatin-like protein 3 (STOML3) from Homo sapiens (Human).